The primary structure comprises 574 residues: Polyamine aminopropyltransferase (574 aa).

A run of 7 helical transmembrane segments spans residues 22–42 (VLLLGIMAVLAGCGLIYEYLL), 55–75 (AAIYTMIGLMIVSMGLGAFAA), 90–110 (LTVALCGSLAILITAAVIGFG), 144–164 (LPYFWGVLLGLMIGMEIPLIA), 188–208 (IGAGIGAAIWVGFMLAIDIQL), 209–229 (AAALTASFNLLAGFVFIWRFW), and 237–257 (LLLAAHLVVTGVLLLLAIQGP). The spermidine synthase stretch occupies residues 254–510 (IQGPSWEQQF…ATLDGKDAQH (257 aa)). Residues 257 to 505 (PSWEQQFNNL…WGWSIATLDG (249 aa)) enclose the PABS domain. Q281 lines the S-methyl-5'-thioadenosine pocket. Residues H317 and D341 each contribute to the spermidine site. Residues D360 and 403 to 404 (DA) each bind S-methyl-5'-thioadenosine. Residue D424 is the Proton acceptor of the active site.

This sequence belongs to the spermidine/spermine synthase family. Homodimer or homotetramer.

It is found in the cell membrane. The enzyme catalyses S-adenosyl 3-(methylsulfanyl)propylamine + putrescine = S-methyl-5'-thioadenosine + spermidine + H(+). Its pathway is amine and polyamine biosynthesis; spermidine biosynthesis; spermidine from putrescine: step 1/1. Its function is as follows. Catalyzes the irreversible transfer of a propylamine group from the amino donor S-adenosylmethioninamine (decarboxy-AdoMet) to putrescine (1,4-diaminobutane) to yield spermidine. This Shewanella oneidensis (strain ATCC 700550 / JCM 31522 / CIP 106686 / LMG 19005 / NCIMB 14063 / MR-1) protein is Polyamine aminopropyltransferase.